Reading from the N-terminus, the 753-residue chain is Transcription factor SOX-30 (753 aa).

2 disordered regions span residues 1–45 (MERA…TLSA) and 140–161 (QELG…TGPR). The span at 7–22 (EPQPQQRPLRPAPPLL) shows a compositional bias: pro residues. Residues 337-405 (VKRPMNAFMV…KHREEFPGWV (69 aa)) constitute a DNA-binding region (HMG box). Disordered regions lie at residues 514–540 (AGPS…PVSL) and 726–753 (PTST…LRDL). Polar residues-rich tracts occupy residues 531-540 (TVKQPTPVSL) and 726-739 (PTST…VNVT).

As to quaternary structure, interacts with CTNNB1, competitively inhibiting CTNNB1-TCF7L2/TCF4 interaction.

It is found in the nucleus. The protein localises to the cytoplasm. Acts both as a transcriptional activator and a repressor. Binds to the DNA sequence 5'-ACAAT-3' and shows a preference for guanine residues surrounding this core motif. Binds to its own promoter and activates its own transcription. Required to activate the expression of postmeiotic genes involved in spermiogenesis. Binds to the promoter region of CTNNB1 and represses its transcription which leads to inhibition of Wnt signaling. Also inhibits Wnt signaling by binding to the CTNNB1 protein, preventing interaction of CTNNB1 with TCF7L2/TCF4. In Macaca fascicularis (Crab-eating macaque), this protein is Transcription factor SOX-30 (SOX30).